The sequence spans 374 residues: Alanine racemase (374 aa).

K40 serves as the catalytic Proton acceptor; specific for D-alanine. K40 is subject to N6-(pyridoxal phosphate)lysine. R136 contributes to the substrate binding site. Y264 functions as the Proton acceptor; specific for L-alanine in the catalytic mechanism. Position 311 (M311) interacts with substrate.

It belongs to the alanine racemase family. Pyridoxal 5'-phosphate serves as cofactor.

It catalyses the reaction L-alanine = D-alanine. It functions in the pathway amino-acid biosynthesis; D-alanine biosynthesis; D-alanine from L-alanine: step 1/1. Catalyzes the interconversion of L-alanine and D-alanine. May also act on other amino acids. In Pediococcus pentosaceus (strain ATCC 25745 / CCUG 21536 / LMG 10740 / 183-1w), this protein is Alanine racemase (alr).